The primary structure comprises 216 residues: MAELVFHTGPMDSGKSTLALQMDHAQSAHDRQGVRYAMHDRSGGARITSRIGLSVEAVEVTDSLDLYQDIVSRLSRGGRIDYLICDEAQFYRTKQIDQLARVVDDLDIDVYCFGILADFRTELFPGSKRLVELADRVVEPPVSPLCWCGRPATHNARIVDGKLVREGDQVGVGDIGGGSEIHYEVLCRRHHRQGITGEISRATLSEQTLPFDGSRS.

Residues 9–16 and 86–89 contribute to the ATP site; these read GPMDSGKS and DEAQ. Residue E87 is the Proton acceptor of the active site.

Belongs to the thymidine kinase family. Homotetramer.

The protein resides in the cytoplasm. The enzyme catalyses thymidine + ATP = dTMP + ADP + H(+). The chain is Thymidine kinase from Cutibacterium acnes (strain DSM 16379 / KPA171202) (Propionibacterium acnes).